Here is a 182-residue protein sequence, read N- to C-terminus: Pyruvoyl-dependent arginine decarboxylase (182 aa).

Ser44 is modified (pyruvic acid (Ser)).

This sequence belongs to the PdaD family. Pyruvate serves as cofactor.

The catalysed reaction is L-arginine + H(+) = agmatine + CO2. In Thermoplasma volcanium (strain ATCC 51530 / DSM 4299 / JCM 9571 / NBRC 15438 / GSS1), this protein is Pyruvoyl-dependent arginine decarboxylase.